A 313-amino-acid chain; its full sequence is Ribosomal RNA small subunit methyltransferase H (313 aa).

S-adenosyl-L-methionine is bound by residues 34 to 36, Asp-53, Phe-80, Asp-101, and Gln-108; that span reads GGH.

The protein belongs to the methyltransferase superfamily. RsmH family.

The protein localises to the cytoplasm. It carries out the reaction cytidine(1402) in 16S rRNA + S-adenosyl-L-methionine = N(4)-methylcytidine(1402) in 16S rRNA + S-adenosyl-L-homocysteine + H(+). Functionally, specifically methylates the N4 position of cytidine in position 1402 (C1402) of 16S rRNA. This Lacticaseibacillus casei (strain BL23) (Lactobacillus casei) protein is Ribosomal RNA small subunit methyltransferase H.